A 515-amino-acid chain; its full sequence is Maturase K (515 aa).

The protein belongs to the intron maturase 2 family. MatK subfamily.

Its subcellular location is the plastid. It localises to the chloroplast. Functionally, usually encoded in the trnK tRNA gene intron. Probably assists in splicing its own and other chloroplast group II introns. The protein is Maturase K of Pinus cembra (Swiss stone pine).